We begin with the raw amino-acid sequence, 419 residues long: Nodulation protein NoeE (419 aa).

Functionally, required for the formation of sulfated nod factor. Proposed to transfer activated sulfate (PAPS) to the fucose of the nod factor. This Sinorhizobium fredii (strain NBRC 101917 / NGR234) protein is Nodulation protein NoeE (noeE).